The sequence spans 129 residues: KVYGRCELAAAMKRLGLDNYRGYSLGNWVCAAKFESNFNTHATNRNTDGSTDYGILQINSRWWCNDGRTPGSRNLCNIPCSALLSSDITASVNCAKKIVSGGSGMNAWVAWRNRCKGTDVQAWIRGCRL.

In terms of domain architecture, C-type lysozyme spans 1 to 129 (KVYGRCELAA…VQAWIRGCRL (129 aa)). 4 cysteine pairs are disulfide-bonded: Cys6/Cys127, Cys30/Cys115, Cys64/Cys80, and Cys76/Cys94. Residues Glu35 and Asp52 contribute to the active site.

Belongs to the glycosyl hydrolase 22 family. Monomer.

The protein localises to the secreted. The enzyme catalyses Hydrolysis of (1-&gt;4)-beta-linkages between N-acetylmuramic acid and N-acetyl-D-glucosamine residues in a peptidoglycan and between N-acetyl-D-glucosamine residues in chitodextrins.. Functionally, lysozymes have primarily a bacteriolytic function; those in tissues and body fluids are associated with the monocyte-macrophage system and enhance the activity of immunoagents. This Tragopan satyra (Satyr tragopan) protein is Lysozyme C (LYZ).